We begin with the raw amino-acid sequence, 498 residues long: ATP synthase subunit beta, chloroplastic (498 aa).

Residue Gly172–Thr179 participates in ATP binding.

It belongs to the ATPase alpha/beta chains family. F-type ATPases have 2 components, CF(1) - the catalytic core - and CF(0) - the membrane proton channel. CF(1) has five subunits: alpha(3), beta(3), gamma(1), delta(1), epsilon(1). CF(0) has four main subunits: a(1), b(1), b'(1) and c(9-12).

It localises to the plastid. The protein localises to the chloroplast thylakoid membrane. The catalysed reaction is ATP + H2O + 4 H(+)(in) = ADP + phosphate + 5 H(+)(out). In terms of biological role, produces ATP from ADP in the presence of a proton gradient across the membrane. The catalytic sites are hosted primarily by the beta subunits. The sequence is that of ATP synthase subunit beta, chloroplastic from Beta vulgaris (Sugar beet).